Reading from the N-terminus, the 297-residue chain is tRNA (guanine-N(7)-)-methyltransferase (297 aa).

Residues Gly101, 124–125, 171–172, and Cys191 contribute to the S-adenosyl-L-methionine site; these read EI and NT. Asp194 is an active-site residue. An S-adenosyl-L-methionine-binding site is contributed by 270–272; that stretch reads TEE.

This sequence belongs to the class I-like SAM-binding methyltransferase superfamily. TrmB family. As to quaternary structure, forms a complex with trm82.

It localises to the nucleus. It carries out the reaction guanosine(46) in tRNA + S-adenosyl-L-methionine = N(7)-methylguanosine(46) in tRNA + S-adenosyl-L-homocysteine. It functions in the pathway tRNA modification; N(7)-methylguanine-tRNA biosynthesis. In terms of biological role, catalyzes the formation of N(7)-methylguanine at position 46 (m7G46) in tRNA. The protein is tRNA (guanine-N(7)-)-methyltransferase (trm8) of Aspergillus niger (strain ATCC MYA-4892 / CBS 513.88 / FGSC A1513).